A 36-amino-acid polypeptide reads, in one-letter code: Putative DNA-binding protein inhibitor ID-2B (36 aa).

This Homo sapiens (Human) protein is Putative DNA-binding protein inhibitor ID-2B (ID2B).